We begin with the raw amino-acid sequence, 225 residues long: uncharacterized protein (225 aa).

4 helical membrane passes run 40–60, 63–83, 151–171, and 176–196; these read LISLAAVFFCHSGMEALLSIV, LAFFHAGTALSSLLASLPFSF, LSETNLSIVFCILTTSSLTIL, and IFSLLLVVCTSACFSSAIVSL.

The protein resides in the membrane. This is an uncharacterized protein from Saccharomyces cerevisiae (strain ATCC 204508 / S288c) (Baker's yeast).